The chain runs to 512 residues: Cytochrome P450 72A13 (512 aa).

Residues Glu-2–Trp-22 traverse the membrane as a helical segment. Cys-460 lines the heme pocket.

Belongs to the cytochrome P450 family. Heme serves as cofactor.

Its subcellular location is the membrane. This is Cytochrome P450 72A13 (CYP72A13) from Arabidopsis thaliana (Mouse-ear cress).